The sequence spans 122 residues: Small ribosomal subunit protein uS13 (122 aa).

Residues 97-122 form a disordered region; the sequence is PVRGQRTKTNARTRKGPARTVAGKKK.

The protein belongs to the universal ribosomal protein uS13 family. In terms of assembly, part of the 30S ribosomal subunit. Forms a loose heterodimer with protein S19. Forms two bridges to the 50S subunit in the 70S ribosome.

Its function is as follows. Located at the top of the head of the 30S subunit, it contacts several helices of the 16S rRNA. In the 70S ribosome it contacts the 23S rRNA (bridge B1a) and protein L5 of the 50S subunit (bridge B1b), connecting the 2 subunits; these bridges are implicated in subunit movement. Contacts the tRNAs in the A and P-sites. This is Small ribosomal subunit protein uS13 from Geobacter metallireducens (strain ATCC 53774 / DSM 7210 / GS-15).